A 338-amino-acid polypeptide reads, in one-letter code: tRNA N6-adenosine threonylcarbamoyltransferase (338 aa).

Residues His-111 and His-115 each contribute to the Fe cation site. Residues 134 to 138 (LVSGG), Asp-167, Gly-180, and Asn-272 each bind substrate. Asp-300 serves as a coordination point for Fe cation.

The protein belongs to the KAE1 / TsaD family. Requires Fe(2+) as cofactor.

The protein resides in the cytoplasm. The catalysed reaction is L-threonylcarbamoyladenylate + adenosine(37) in tRNA = N(6)-L-threonylcarbamoyladenosine(37) in tRNA + AMP + H(+). Functionally, required for the formation of a threonylcarbamoyl group on adenosine at position 37 (t(6)A37) in tRNAs that read codons beginning with adenine. Is involved in the transfer of the threonylcarbamoyl moiety of threonylcarbamoyl-AMP (TC-AMP) to the N6 group of A37, together with TsaE and TsaB. TsaD likely plays a direct catalytic role in this reaction. The sequence is that of tRNA N6-adenosine threonylcarbamoyltransferase from Vibrio atlanticus (strain LGP32) (Vibrio splendidus (strain Mel32)).